Here is a 406-residue protein sequence, read N- to C-terminus: 8-amino-7-oxononanoate synthase (406 aa).

R20 provides a ligand contact to substrate. 116-117 provides a ligand contact to pyridoxal 5'-phosphate; that stretch reads GY. H141 serves as a coordination point for substrate. Pyridoxal 5'-phosphate is bound by residues S187, H215, and T243. N6-(pyridoxal phosphate)lysine is present on K246. T366 contributes to the substrate binding site.

The protein belongs to the class-II pyridoxal-phosphate-dependent aminotransferase family. BioF subfamily. Homodimer. Requires pyridoxal 5'-phosphate as cofactor.

It catalyses the reaction 6-carboxyhexanoyl-[ACP] + L-alanine + H(+) = (8S)-8-amino-7-oxononanoate + holo-[ACP] + CO2. Its pathway is cofactor biosynthesis; biotin biosynthesis. Its function is as follows. Catalyzes the decarboxylative condensation of pimeloyl-[acyl-carrier protein] and L-alanine to produce 8-amino-7-oxononanoate (AON), [acyl-carrier protein], and carbon dioxide. The polypeptide is 8-amino-7-oxononanoate synthase (Cupriavidus metallidurans (strain ATCC 43123 / DSM 2839 / NBRC 102507 / CH34) (Ralstonia metallidurans)).